The primary structure comprises 634 residues: DNA gyrase subunit B (634 aa).

Positions 1–220 (MSYDASAIRV…EEVFLDKGGV (220 aa)) are ATPase domain. The interval 221-390 (ASFAKALAEG…EAARKARELV (170 aa)) is transducer domain. The Toprim domain occupies 416 to 534 (AELFIVEGDS…RGHVYIAQPP (119 aa)). Residues E422, D499, and D501 each coordinate Mg(2+).

Belongs to the type II topoisomerase GyrB family. Heterotetramer, composed of two GyrA and two GyrB chains. Non-hydrolyzable ATP analogs induce dimerization, novobiocin also induces a small amount of dimerization. The two subunits form an intertwined dimer where the GyrB ATPase transducer helix of 1 subunit connects to the Toprim domain of the other GyrB subunit through a 10 residue linker. In the heterotetramer, GyrA contains the active site tyrosine that forms a covalent intermediate with the DNA, while GyrB binds cofactors and catalyzes ATP hydrolysis. Requires Mg(2+) as cofactor. The cofactor is Mn(2+). Ca(2+) serves as cofactor.

Its subcellular location is the cytoplasm. The enzyme catalyses ATP-dependent breakage, passage and rejoining of double-stranded DNA.. Functionally, a type II topoisomerase that negatively supercoils closed circular double-stranded (ds) DNA in an ATP-dependent manner. It probably also catalyzes the interconversion of other topological isomers of double-stranded DNA rings, including catenanes. Relaxes negatively supercoiled DNA in an ATP-independent manner. At comparable concentrations T.thermophilus gyrase does not introduce as many negative supercoils into DNA as the E.coli enzyme. Its function is as follows. Negative supercoiling favors strand separation, and DNA replication, transcription, recombination and repair, all of which involve strand separation. Type II topoisomerases break and join 2 DNA strands simultaneously in an ATP-dependent manner. The protein is DNA gyrase subunit B of Thermus thermophilus (strain ATCC 27634 / DSM 579 / HB8).